We begin with the raw amino-acid sequence, 27 residues long: Conotoxin Lo6/7b (27 aa).

Cystine bridges form between cysteine 2–cysteine 16, cysteine 9–cysteine 19, and cysteine 15–cysteine 26. Tyrosine 27 is modified (tyrosine amide).

As to expression, expressed by the venom duct.

It is found in the secreted. 1 uM of this toxin does not show any effect on voltage-gated sodium and potassium channels. Does not show antibacterial activity on both Gram-negative and Gram-positive bacteria. This Conasprella longurionis (Cone snail) protein is Conotoxin Lo6/7b.